We begin with the raw amino-acid sequence, 630 residues long: Chaperone protein HtpG (630 aa).

Positions 1-341 are a; substrate-binding; sequence MTQNATSETL…SADLPLNVSR (341 aa). Residues 342–558 are b; it reads EILQESRDVR…QNDLSPHLLR (217 aa). The c stretch occupies residues 559–630; it reads MLKAAGQEVP…KRLNALLLKV (72 aa).

Belongs to the heat shock protein 90 family. In terms of assembly, homodimer.

It localises to the cytoplasm. Its function is as follows. Molecular chaperone. Has ATPase activity. This is Chaperone protein HtpG from Bordetella avium (strain 197N).